Reading from the N-terminus, the 309-residue chain is Ribonuclease Z (309 aa).

The Zn(2+) site is built by H63, H65, D67, H68, H141, D212, and H270. The Proton acceptor role is filled by D67.

It belongs to the RNase Z family. In terms of assembly, homodimer. It depends on Zn(2+) as a cofactor.

The catalysed reaction is Endonucleolytic cleavage of RNA, removing extra 3' nucleotides from tRNA precursor, generating 3' termini of tRNAs. A 3'-hydroxy group is left at the tRNA terminus and a 5'-phosphoryl group is left at the trailer molecule.. Its function is as follows. Zinc phosphodiesterase, which displays some tRNA 3'-processing endonuclease activity. Probably involved in tRNA maturation, by removing a 3'-trailer from precursor tRNA. In Lactobacillus gasseri (strain ATCC 33323 / DSM 20243 / BCRC 14619 / CIP 102991 / JCM 1131 / KCTC 3163 / NCIMB 11718 / NCTC 13722 / AM63), this protein is Ribonuclease Z.